A 227-amino-acid polypeptide reads, in one-letter code: Cytochrome c oxidase subunit 2 (227 aa).

The Mitochondrial intermembrane portion of the chain corresponds to 1–14 (MAHAAQMGLQDATS). Residues 15–45 (PIMEELISFHDHALMIIFLISFLVLYALFLT) form a helical membrane-spanning segment. At 46-59 (LTTKLTNTNITDAQ) the chain is on the mitochondrial matrix side. The helical transmembrane segment at 60 to 87 (EMETVWTILPAIILVLIALPSLRILYLT) threads the bilayer. At 88–227 (DEINDPSFTI…IFEMGPVFTL (140 aa)) the chain is on the mitochondrial intermembrane side. 6 residues coordinate Cu cation: His-161, Cys-196, Glu-198, Cys-200, His-204, and Met-207. Glu-198 serves as a coordination point for Mg(2+).

Belongs to the cytochrome c oxidase subunit 2 family. As to quaternary structure, component of the cytochrome c oxidase (complex IV, CIV), a multisubunit enzyme composed of 14 subunits. The complex is composed of a catalytic core of 3 subunits MT-CO1, MT-CO2 and MT-CO3, encoded in the mitochondrial DNA, and 11 supernumerary subunits COX4I, COX5A, COX5B, COX6A, COX6B, COX6C, COX7A, COX7B, COX7C, COX8 and NDUFA4, which are encoded in the nuclear genome. The complex exists as a monomer or a dimer and forms supercomplexes (SCs) in the inner mitochondrial membrane with NADH-ubiquinone oxidoreductase (complex I, CI) and ubiquinol-cytochrome c oxidoreductase (cytochrome b-c1 complex, complex III, CIII), resulting in different assemblies (supercomplex SCI(1)III(2)IV(1) and megacomplex MCI(2)III(2)IV(2)). Found in a complex with TMEM177, COA6, COX18, COX20, SCO1 and SCO2. Interacts with TMEM177 in a COX20-dependent manner. Interacts with COX20. Interacts with COX16. Cu cation is required as a cofactor.

Its subcellular location is the mitochondrion inner membrane. The enzyme catalyses 4 Fe(II)-[cytochrome c] + O2 + 8 H(+)(in) = 4 Fe(III)-[cytochrome c] + 2 H2O + 4 H(+)(out). Functionally, component of the cytochrome c oxidase, the last enzyme in the mitochondrial electron transport chain which drives oxidative phosphorylation. The respiratory chain contains 3 multisubunit complexes succinate dehydrogenase (complex II, CII), ubiquinol-cytochrome c oxidoreductase (cytochrome b-c1 complex, complex III, CIII) and cytochrome c oxidase (complex IV, CIV), that cooperate to transfer electrons derived from NADH and succinate to molecular oxygen, creating an electrochemical gradient over the inner membrane that drives transmembrane transport and the ATP synthase. Cytochrome c oxidase is the component of the respiratory chain that catalyzes the reduction of oxygen to water. Electrons originating from reduced cytochrome c in the intermembrane space (IMS) are transferred via the dinuclear copper A center (CU(A)) of subunit 2 and heme A of subunit 1 to the active site in subunit 1, a binuclear center (BNC) formed by heme A3 and copper B (CU(B)). The BNC reduces molecular oxygen to 2 water molecules using 4 electrons from cytochrome c in the IMS and 4 protons from the mitochondrial matrix. The sequence is that of Cytochrome c oxidase subunit 2 (MT-CO2) from Symphalangus syndactylus (Siamang).